The primary structure comprises 35 residues: Flavodoxin (35 aa).

The 32-residue stretch at 4-35 folds into the Flavodoxin-like domain; it reads IGLFYGTZTGKTESVAEIIDEFGDEVVTLDID.

This sequence belongs to the flavodoxin family. The cofactor is FMN.

Low-potential electron donor to a number of redox enzymes. This is Flavodoxin from Nostoc sp. (strain MAC).